We begin with the raw amino-acid sequence, 121 residues long: Large ribosomal subunit protein uL18 (121 aa).

This sequence belongs to the universal ribosomal protein uL18 family. In terms of assembly, part of the 50S ribosomal subunit; part of the 5S rRNA/L5/L18/L25 subcomplex. Contacts the 5S and 23S rRNAs.

In terms of biological role, this is one of the proteins that bind and probably mediate the attachment of the 5S RNA into the large ribosomal subunit, where it forms part of the central protuberance. This Albidiferax ferrireducens (strain ATCC BAA-621 / DSM 15236 / T118) (Rhodoferax ferrireducens) protein is Large ribosomal subunit protein uL18.